A 247-amino-acid polypeptide reads, in one-letter code: Probable transcriptional regulatory protein ETA_14870 (247 aa).

The interval 1-20 is disordered; that stretch reads MAGHSKWANTKHRKAAQDAK.

Belongs to the TACO1 family.

It is found in the cytoplasm. This chain is Probable transcriptional regulatory protein ETA_14870, found in Erwinia tasmaniensis (strain DSM 17950 / CFBP 7177 / CIP 109463 / NCPPB 4357 / Et1/99).